The primary structure comprises 933 residues: Progesterone receptor (933 aa).

The disordered stretch occupies residues 1 to 48 (MTELKAKGPRAPHVAGGPPSPEVGSPLLCRPAAGPFEGSQTSDTLPEV). Residues 1–164 (MTELKAKGPR…PATQRVLSPL (164 aa)) form an AF3; mediates transcriptional activation region. Positions 1 to 566 (MTELKAKGPR…YSFESLPQKI (566 aa)) are modulating, Pro-Rich. Ser-20 bears the Phosphoserine mark. The LXXL motif 1 signature appears at 55-59 (LDGLL). Positions 66–255 (GQDLPDEKTQ…GAAAGGGAAA (190 aa)) are disordered. Ser-81 carries the post-translational modification Phosphoserine. Positions 115 to 119 (LDTLL) match the LXXL motif 2 motif. Phosphoserine is present on residues Ser-130 and Ser-162. The interval 165–305 (MSRSGGKTGD…LATTMMDFIH (141 aa)) is mediates transcriptional transrepression. The Nuclear localization signal signature appears at 183-187 (KVLPR). A phosphoserine mark is found at Ser-190 and Ser-213. The residue at position 294 (Ser-294) is a Phosphoserine; by MAPK1. The disordered stretch occupies residues 331–378 (GGAGAASAFAPPQSSPSASSTPVAVGDFPDCAYPPDAEPKDNAYPLYG). Positions 335–350 (AASAFAPPQSSPSASS) are enriched in low complexity. Ser-345 bears the Phosphoserine; by MAPK mark. Residue Lys-388 forms a Glycyl lysine isopeptide (Lys-Gly) (interchain with G-Cter in SUMO); alternate linkage. Lys-388 participates in a covalent cross-link: Glycyl lysine isopeptide (Lys-Gly) (interchain with G-Cter in ubiquitin); alternate. Residue Ser-400 is modified to Phosphoserine; by CDK2. Positions 415 to 454 (PDYPLGPPPQLPPRAPPSRPGEAAVTAAPASASVSSASSP) are disordered. Pro residues predominate over residues 418-433 (PLGPPPQLPPRAPPSR). Residues 437-454 (AAVTAAPASASVSSASSP) are compositionally biased toward low complexity. Residues 456–546 (STLECILYKA…VYPPYLNYLR (91 aa)) form an AF1; mediates transcriptional activation region. Lys-531 is covalently cross-linked (Glycyl lysine isopeptide (Lys-Gly) (interchain with G-Cter in SUMO)). 2 NR C4-type zinc fingers span residues 567–587 (CLICGDEASGCHYGVLTCGSC) and 603–627 (CAGRNDCIVDKIRRKNCPACRLRKC). The nuclear receptor DNA-binding region spans 567–639 (CLICGDEASG…AGMVLGGRKF (73 aa)). Phosphoserine is present on Ser-676. An NR LBD domain is found at 679–913 (QDIQLIPPLI…EFPEMMSEVI (235 aa)). The interval 687–933 (LIKLLMSIEP…MVKPLLFHKK (247 aa)) is AF2; mediates transcriptional activation.

It belongs to the nuclear hormone receptor family. Interacts with SMARD1 and UNC45A. Interacts with CUEDC2; the interaction promotes ubiquitination, decreases sumoylation, and represses transcriptional activity. Interacts with PIAS3; the interaction promotes sumoylation of PR in a hormone-dependent manner, inhibits DNA-binding, and alters nuclear export. Interacts with SP1; the interaction requires ligand-induced phosphorylation on Ser-345 by ERK1/2-MAPK. Interacts with PRMT2. Interacts with NCOA2 and NCOA1. Interacts with KLF9. Interacts with GTF2B. Phosphorylated on multiple serine sites. Several of these sites are hormone-dependent. Phosphorylation on Ser-294 is highly hormone-dependent and modulates ubiquitination and sumoylation on Lys-388. Phosphorylation on Ser-345 also requires induction by hormone. Basal phosphorylation on Ser-81, Ser-162, Ser-190 and Ser-400 is increased in response to progesterone and can be phosphorylated in vitro by the CDK2-A1 complex. Increased levels of phosphorylation on Ser-400 also in the presence of EGF, heregulin, IGF, PMA and FBS. Phosphorylation at this site by CDK2 is ligand-independent, and increases nuclear translocation and transcriptional activity. Phosphorylation at Ser-162 and Ser-294, but not at Ser-190, is impaired during the G(2)/M phase of the cell cycle. Phosphorylation on Ser-345 by ERK1/2 MAPK is required for interaction with SP1. In terms of processing, sumoylation is hormone-dependent and represses transcriptional activity. Sumoylation on all three sites is enhanced by PIAS3. Desumoylated by SENP1. Sumoylation on Lys-388, the main site of sumoylation, is repressed by ubiquitination on the same site, and modulated by phosphorylation at Ser-294. Post-translationally, ubiquitination is hormone-dependent and represses sumoylation on the same site. Promoted by MAPK-mediated phosphorylation on Ser-294. Palmitoylated by ZDHHC7 and ZDHHC21. Palmitoylation is required for plasma membrane targeting and for rapid intracellular signaling via ERK and AKT kinases and cAMP generation.

The protein resides in the nucleus. It is found in the cytoplasm. Functionally, the steroid hormones and their receptors are involved in the regulation of eukaryotic gene expression and affect cellular proliferation and differentiation in target tissues. Transcriptional activator of several progesteron-dependent promoters in a variety of cell types. Involved in activation of SRC-dependent MAPK signaling on hormone stimulation. This is Progesterone receptor (PGR) from Trachypithecus obscurus (Dusky leaf-monkey).